We begin with the raw amino-acid sequence, 357 residues long: Alternative oxidase, mitochondrial (357 aa).

A helical membrane pass occupies residues 152 to 172; the sequence is LTRCIFLESIAGVPGAVASFI. Positions 159, 198, and 201 each coordinate Fe cation. The helical transmembrane segment at 218–238 threads the bilayer; the sequence is IIYVGQGVFCNLFFLFYLANP. The Fe cation site is built by Glu-249, Glu-304, and His-307. The segment at 330-357 is disordered; sequence IPDLKEPQPESGLKVTKPHGWEKEELKL. Over residues 348-357 the composition is skewed to basic and acidic residues; the sequence is HGWEKEELKL.

This sequence belongs to the alternative oxidase family. Fe cation serves as cofactor.

The protein localises to the mitochondrion inner membrane. Its function is as follows. Catalyzes cyanide-resistant oxygen consumption. May increase respiration when the cytochrome respiratory pathway is restricted, or in response to low temperatures. This chain is Alternative oxidase, mitochondrial (STO1), found in Scheffersomyces stipitis (strain ATCC 58785 / CBS 6054 / NBRC 10063 / NRRL Y-11545) (Yeast).